A 275-amino-acid polypeptide reads, in one-letter code: Large ribosomal subunit protein uL2 (275 aa).

2 disordered regions span residues 28-49 and 224-246; these read APHA…HGRI and AMNP…NPHP.

It belongs to the universal ribosomal protein uL2 family. As to quaternary structure, part of the 50S ribosomal subunit. Forms a bridge to the 30S subunit in the 70S ribosome.

One of the primary rRNA binding proteins. Required for association of the 30S and 50S subunits to form the 70S ribosome, for tRNA binding and peptide bond formation. It has been suggested to have peptidyltransferase activity; this is somewhat controversial. Makes several contacts with the 16S rRNA in the 70S ribosome. This chain is Large ribosomal subunit protein uL2, found in Stenotrophomonas maltophilia (strain R551-3).